A 155-amino-acid polypeptide reads, in one-letter code: FUN14 domain-containing protein 1 (155 aa).

Topologically, residues 1–47 (MASRNPPPQDYESDDESYEVLDLTEYARRHHWWNRVFGHSSGPMVEK) are cytoplasmic. A phosphoserine mark is found at Ser-13 and Ser-17. At Tyr-18 the chain carries Phosphotyrosine; by SRC. Residues 18-21 (YEVL) carry the YXXL motif. The chain crosses the membrane as a helical span at residues 48-68 (YSVATQIVMGGVTGWCAGFLF). The Mitochondrial intermembrane segment spans residues 69-74 (QKVGKL). Residues 75-95 (AATAVGGGFLLLQVASHSGYV) traverse the membrane as a helical segment. Residues 96-133 (QIDWKRVEKDVNKAKRQIKKRANKAAPEINNIIEEATD) are Cytoplasmic-facing. Residue Lys-119 forms a Glycyl lysine isopeptide (Lys-Gly) (interchain with G-Cter in ubiquitin) linkage. The chain crosses the membrane as a helical span at residues 134-154 (FIKQNIVISSGFVGGFLLGLA). Ser-155 is a topological domain (mitochondrial intermembrane).

This sequence belongs to the FUN14 family. As to quaternary structure, interacts (via YXXL motif) with MAP1 LC3 family proteins MAP1LC3A, MAP1LC3B and GABARAP. Interacts with DNM1L/DPR1. Interacts with GPX4. Post-translationally, phosphorylation at Ser-13 by CK2 and at Tyr-18 by SRC inhibits activation of mitophagy. Following hypoxia, dephosphorylated at Tyr-18, leading to interaction with MAP1 LC3 family proteins and triggering mitophagy. Dephosphorylation is mediated by PGAM5. Phosphorylated by ULK1 at Ser-17 which enhances FUNDC1 binding to LC3. In terms of processing, ubiquitinated on Lys-119. Deubiquitinated by USP19; leading to hypoxia-induced DRP1 oligomerization and GTPase activity.

Its subcellular location is the mitochondrion outer membrane. Integral mitochondrial outer-membrane protein that mediates the formation of mitochondria-associated endoplasmic reticulum membranes (MAMs). In turn, mediates angiogenesis and neoangiogenesis through interference with intracellular Ca(2+) communication and regulation of the vascular endothelial growth factor receptor KDR/VEGFR2 expression at both mRNA and protein levels. Also acts as an activator of hypoxia-induced mitophagy, an important mechanism for mitochondrial quality and homeostasis, by interacting with and recruiting LC3 protein family to mitochondria. Mechanistically, recruits DRP1 at ER-mitochondria contact sites leading to DRP1 oligomerization and GTPase activity to facilitate mitochondrial fission during hypoxia. Additionally, plays a role in hepatic ferroptosis by interacting directly with glutathione peroxidase/GPX4 to facilitate its recruitment into mitochondria through TOM/TIM complex where it is degraded by mitophagy. The polypeptide is FUN14 domain-containing protein 1 (Fundc1) (Mus musculus (Mouse)).